Reading from the N-terminus, the 411-residue chain is Formate-dependent phosphoribosylglycinamide formyltransferase (411 aa).

E25–L26 is a N(1)-(5-phospho-beta-D-ribosyl)glycinamide binding site. ATP-binding positions include R118, K159, S164–Q169, E199–I202, and E207. Residues T123–L318 enclose the ATP-grasp domain. Residues E277 and E289 each contribute to the Mg(2+) site. Residues D296, K366, and R373–R374 each bind N(1)-(5-phospho-beta-D-ribosyl)glycinamide.

This sequence belongs to the PurK/PurT family. Homodimer.

It catalyses the reaction N(1)-(5-phospho-beta-D-ribosyl)glycinamide + formate + ATP = N(2)-formyl-N(1)-(5-phospho-beta-D-ribosyl)glycinamide + ADP + phosphate + H(+). The protein operates within purine metabolism; IMP biosynthesis via de novo pathway; N(2)-formyl-N(1)-(5-phospho-D-ribosyl)glycinamide from N(1)-(5-phospho-D-ribosyl)glycinamide (formate route): step 1/1. In terms of biological role, involved in the de novo purine biosynthesis. Catalyzes the transfer of formate to 5-phospho-ribosyl-glycinamide (GAR), producing 5-phospho-ribosyl-N-formylglycinamide (FGAR). Formate is provided by PurU via hydrolysis of 10-formyl-tetrahydrofolate. The chain is Formate-dependent phosphoribosylglycinamide formyltransferase from Corynebacterium jeikeium (strain K411).